A 103-amino-acid chain; its full sequence is Large ribosomal subunit protein bL21 (103 aa).

This sequence belongs to the bacterial ribosomal protein bL21 family. In terms of assembly, part of the 50S ribosomal subunit. Contacts protein L20.

Functionally, this protein binds to 23S rRNA in the presence of protein L20. In Nocardia farcinica (strain IFM 10152), this protein is Large ribosomal subunit protein bL21.